A 912-amino-acid chain; its full sequence is Androgen receptor (912 aa).

The segment at 1–550 (MEVQLGLGRV…PIDYYFPPQK (550 aa)) is modulating. The tract at residues 1-579 (MEVQLGLGRV…GSCKVFFKRA (579 aa)) is interaction with ZNF318. Disordered stretches follow at residues 35–156 (QNPG…GPTF) and 204–236 (QQQQEVVSEGGSSGRAREAAGAPTSSKDSYLGG). The residue at position 69 (S69) is a Phosphoserine; by CDK9. Phosphoserine is present on S82. Residues 204-213 (QQQQEVVSEG) are compositionally biased toward low complexity. The span at 226-236 (PTSSKDSYLGG) shows a compositional bias: polar residues. Residue Y233 is modified to Phosphotyrosine; by CSK. At S266 the chain carries Phosphoserine. The residue at position 277 (Y277) is a Phosphotyrosine; by CSK and TNK2. Y315, Y354, Y365, and Y370 each carry phosphotyrosine; by CSK. A Phosphotyrosine; by CSK and TNK2 modification is found at Y371. Residues 375–394 (LSLAGPPPPPPSPHPHARIK) are disordered. Residues 379–388 (GPPPPPPSPH) are compositionally biased toward pro residues. Residue K394 forms a Glycyl lysine isopeptide (Lys-Gly) (interchain with G-Cter in SUMO) linkage. Y401 carries the post-translational modification Phosphotyrosine; by CSK. Residues 452–490 (LYGPCGGSGGGGTGESVSVTPYGYTRPQQGLTGQEGDFP) form a disordered region. Residues 455–465 (PCGGSGGGGTG) show a composition bias toward gly residues. Residue K513 forms a Glycyl lysine isopeptide (Lys-Gly) (interchain with G-Cter in SUMO) linkage. Residues Y527 and Y544 each carry the phosphotyrosine; by CSK modification. The segment at 544-911 (YYFPPQKTCL…GKVKPIYFHT (368 aa)) is interaction with LPXN. The nuclear receptor DNA-binding region spans 551 to 624 (TCLICGDEAS…AGMTLGARRL (74 aa)). NR C4-type zinc fingers lie at residues 552-572 (CLICGDEASGCHYGALTCGSC) and 588-612 (CASRNDCTIDKFRRKNCPPCRLRKC). The interval 564-654 (YGALTCGSCK…TEETTQKLTV (91 aa)) is interaction with HIPK3. The tract at residues 584-911 (QKYLCASRND…GKVKPIYFHT (328 aa)) is interaction with CCAR1. Positions 617-911 (MTLGARRLKK…GKVKPIYFHT (295 aa)) are interaction with KAT7. Phosphoserine; by STK4/MST1 is present on S643. Residues 661–892 (ECQPIFLNVL…DFPEMMAEII (232 aa)) form the NR LBD domain. Positions 698 and 745 each coordinate 17beta-hydroxy-5alpha-androstan-3-one. Glycyl lysine isopeptide (Lys-Gly) (interchain with G-Cter in ubiquitin) cross-links involve residues K838 and K840. T870 contributes to the 17beta-hydroxy-5alpha-androstan-3-one binding site. A Phosphotyrosine; by CSK modification is found at Y908.

It belongs to the nuclear hormone receptor family. NR3 subfamily. Binds DNA as a homodimer. Part of a ternary complex containing AR, EFCAB6/DJBP and PARK7. Interacts with HIPK3 and NR0B2 in the presence of androgen. The ligand binding domain interacts with KAT7/HBO1 in the presence of dihydrotestosterone. Interacts with EFCAB6/DJBP, PQBP1, RANBP9, RBAK, SPDEF, SRA1, TGFB1I1 and RREB1. Interacts with ZMIZ1/ZIMP10 and ZMIZ2/ZMIP7 which both enhance its transactivation activity. Interacts with SLC30A9 and RAD54L2/ARIP4. Interacts with MACROD1 (via macro domain). Interacts via the ligand-binding domain with LXXLL and FXXLF motifs from NCOA1, NCOA2, NCOA3 and MAGEA11. Interacts (via nuclear receptor DNA binding domain and nuclear receptor ligand binding domain) with NCOA4. The AR N-terminal poly-Gln region binds Ran resulting in enhancement of AR-mediated transactivation. Ran-binding decreases as the poly-Gln length increases. Interacts with HIP1 (via coiled coil domain). Interacts (via ligand-binding domain) with TRIM68. Interacts with TNK2. Interacts with USP26. Interacts with RNF6. Interacts (regulated by RNF6 probably through polyubiquitination) with RNF14; regulates AR transcriptional activity. Interacts with PRMT2 and TRIM24. Interacts with RACK1. Interacts with RANBP10; this interaction enhances dihydrotestosterone-induced AR transcriptional activity. Interacts with PRPF6 in a hormone-independent way; this interaction enhances dihydrotestosterone-induced AR transcriptional activity. Interacts with STK4/MST1. Interacts with ZIPK/DAPK3. Interacts with LPXN. Interacts with MAK. Part of a complex containing AR, MAK and NCOA3. Interacts with CRY1. Interacts with CCAR1 and GATA2. Interacts with ZNF318. Interacts with BUD31. Interacts with ARID4A. Interacts with ARID4B. Interacts (via NR LBD domain) with ZBTB7A; the interaction is direct and androgen-dependent. Interacts with NCOR1. Interacts with NCOR2. Interacts with CRY2 in a ligand-dependent manner. Post-translationally, phosphorylation by TNK2 enhances the DNA-binding and transcriptional activity. Phosphorylation at Ser-69 by CDK9 regulates AR promoter selectivity and cell growth. In terms of processing, sumoylated on Lys-394 (major) and Lys-513. Ubiquitinated. Deubiquitinated by USP26. 'Lys-6' and 'Lys-27'-linked polyubiquitination by RNF6 modulates AR transcriptional activity and specificity. Palmitoylated by ZDHHC7 and ZDHHC21. Palmitoylation is required for plasma membrane targeting and for rapid intracellular signaling via ERK and AKT kinases and cAMP generation.

Its subcellular location is the nucleus. The protein localises to the cytoplasm. Functionally, steroid hormone receptors are ligand-activated transcription factors that regulate eukaryotic gene expression and affect cellular proliferation and differentiation in target tissues. Transcription factor activity is modulated by bound coactivator and corepressor proteins like ZBTB7A that recruits NCOR1 and NCOR2 to the androgen response elements/ARE on target genes, negatively regulating androgen receptor signaling and androgen-induced cell proliferation. Transcription activation is also down-regulated by NR0B2. Activated, but not phosphorylated, by HIPK3 and ZIPK/DAPK3. The chain is Androgen receptor (AR) from Crocuta crocuta (Spotted hyena).